The chain runs to 204 residues: MTEWETAAPAVAETPDIKLFGKWSTDDVQINDISLQDYIAVKEKYAKYLPHSAGRYAAKRFRKAQCPIVERLTNSMMMHGRNNGKKLMTVRIVKHAFEIIHLLTGENPLQVLVNAIINSGPREDSTRIGRAGTVRRQAVDVSPLRRVNQAIWLLCTGAREAAFRNIKTIAECLADELINAAKGSSNSYAIKKKDELERVAKSNR.

Met-1 is modified (N-acetylmethionine). Residue Thr-2 is modified to N-acetylthreonine; in 40S ribosomal protein S5, N-terminally processed. A Phosphothreonine modification is found at Thr-14. The residue at position 47 (Lys-47) is an N6-acetyllysine; alternate. Residue Lys-47 forms a Glycyl lysine isopeptide (Lys-Gly) (interchain with G-Cter in SUMO2); alternate linkage. Ser-142 is modified (phosphoserine).

It belongs to the universal ribosomal protein uS7 family. In terms of assembly, component of the small ribosomal subunit. Part of the small subunit (SSU) processome, composed of more than 70 proteins and the RNA chaperone small nucleolar RNA (snoRNA) U3.

Its subcellular location is the cytoplasm. The protein resides in the nucleus. It is found in the nucleolus. In terms of biological role, component of the small ribosomal subunit. The ribosome is a large ribonucleoprotein complex responsible for the synthesis of proteins in the cell. Part of the small subunit (SSU) processome, first precursor of the small eukaryotic ribosomal subunit. During the assembly of the SSU processome in the nucleolus, many ribosome biogenesis factors, an RNA chaperone and ribosomal proteins associate with the nascent pre-rRNA and work in concert to generate RNA folding, modifications, rearrangements and cleavage as well as targeted degradation of pre-ribosomal RNA by the RNA exosome. This is Small ribosomal subunit protein uS7 (RPS5) from Bos taurus (Bovine).